A 152-amino-acid chain; its full sequence is UPF0178 protein SAB0630c (152 aa).

It belongs to the UPF0178 family.

The sequence is that of UPF0178 protein SAB0630c from Staphylococcus aureus (strain bovine RF122 / ET3-1).